A 267-amino-acid polypeptide reads, in one-letter code: Phosphatidylglycerol--prolipoprotein diacylglyceryl transferase (267 aa).

4 helical membrane-spanning segments follow: residues 20–40, 57–77, 88–108, and 117–137; these read LEIR…VYLA, FILI…VAFS, IFAI…GAIV, and FINT…AQAI. R139 provides a ligand contact to a 1,2-diacyl-sn-glycero-3-phospho-(1'-sn-glycerol). Transmembrane regions (helical) follow at residues 175 to 195, 205 to 225, and 235 to 255; these read QPTF…VCVL, GEIT…IEGL, and IRVS…MVVL.

The protein belongs to the Lgt family.

Its subcellular location is the cell membrane. The enzyme catalyses L-cysteinyl-[prolipoprotein] + a 1,2-diacyl-sn-glycero-3-phospho-(1'-sn-glycerol) = an S-1,2-diacyl-sn-glyceryl-L-cysteinyl-[prolipoprotein] + sn-glycerol 1-phosphate + H(+). The protein operates within protein modification; lipoprotein biosynthesis (diacylglyceryl transfer). Catalyzes the transfer of the diacylglyceryl group from phosphatidylglycerol to the sulfhydryl group of the N-terminal cysteine of a prolipoprotein, the first step in the formation of mature lipoproteins. This chain is Phosphatidylglycerol--prolipoprotein diacylglyceryl transferase, found in Streptococcus suis (strain 98HAH33).